The following is a 94-amino-acid chain: Phosphoribosyl-ATP pyrophosphatase (94 aa).

It belongs to the PRA-PH family.

The protein localises to the cytoplasm. The enzyme catalyses 1-(5-phospho-beta-D-ribosyl)-ATP + H2O = 1-(5-phospho-beta-D-ribosyl)-5'-AMP + diphosphate + H(+). It functions in the pathway amino-acid biosynthesis; L-histidine biosynthesis; L-histidine from 5-phospho-alpha-D-ribose 1-diphosphate: step 2/9. This Saccharolobus islandicus (strain Y.N.15.51 / Yellowstone #2) (Sulfolobus islandicus) protein is Phosphoribosyl-ATP pyrophosphatase.